The following is a 294-amino-acid chain: ATP phosphoribosyltransferase (294 aa).

It belongs to the ATP phosphoribosyltransferase family. Long subfamily. Mg(2+) is required as a cofactor.

Its subcellular location is the cytoplasm. The enzyme catalyses 1-(5-phospho-beta-D-ribosyl)-ATP + diphosphate = 5-phospho-alpha-D-ribose 1-diphosphate + ATP. It participates in amino-acid biosynthesis; L-histidine biosynthesis; L-histidine from 5-phospho-alpha-D-ribose 1-diphosphate: step 1/9. With respect to regulation, feedback inhibited by histidine. Catalyzes the condensation of ATP and 5-phosphoribose 1-diphosphate to form N'-(5'-phosphoribosyl)-ATP (PR-ATP). Has a crucial role in the pathway because the rate of histidine biosynthesis seems to be controlled primarily by regulation of HisG enzymatic activity. The chain is ATP phosphoribosyltransferase from Chlorobium chlorochromatii (strain CaD3).